The sequence spans 401 residues: Dual-specificity RNA methyltransferase RlmN (401 aa).

The active-site Proton acceptor is Glu114. Positions 120–365 (DKGRGTLCVS…TMVRRTRGDD (246 aa)) constitute a Radical SAM core domain. An intrachain disulfide couples Cys127 to Cys370. Cys134, Cys138, and Cys141 together coordinate [4Fe-4S] cluster. S-adenosyl-L-methionine contacts are provided by residues 187-188 (GE), Ser219, 241-243 (SLH), and Asn327. Cys370 acts as the S-methylcysteine intermediate in catalysis.

It belongs to the radical SAM superfamily. RlmN family. [4Fe-4S] cluster serves as cofactor.

The protein resides in the cytoplasm. The enzyme catalyses adenosine(2503) in 23S rRNA + 2 reduced [2Fe-2S]-[ferredoxin] + 2 S-adenosyl-L-methionine = 2-methyladenosine(2503) in 23S rRNA + 5'-deoxyadenosine + L-methionine + 2 oxidized [2Fe-2S]-[ferredoxin] + S-adenosyl-L-homocysteine. It carries out the reaction adenosine(37) in tRNA + 2 reduced [2Fe-2S]-[ferredoxin] + 2 S-adenosyl-L-methionine = 2-methyladenosine(37) in tRNA + 5'-deoxyadenosine + L-methionine + 2 oxidized [2Fe-2S]-[ferredoxin] + S-adenosyl-L-homocysteine. Specifically methylates position 2 of adenine 2503 in 23S rRNA and position 2 of adenine 37 in tRNAs. m2A2503 modification seems to play a crucial role in the proofreading step occurring at the peptidyl transferase center and thus would serve to optimize ribosomal fidelity. The polypeptide is Dual-specificity RNA methyltransferase RlmN (Xanthomonas campestris pv. campestris (strain 8004)).